A 58-amino-acid chain; its full sequence is Bowman-Birk type wound-induced trypsin inhibitor (58 aa).

7 disulfide bridges follow: C4–C57, C5–C20, C8–C53, C10–C18, C27–C34, C31–C46, and C36–C44.

This sequence belongs to the Bowman-Birk serine protease inhibitor family.

This is Bowman-Birk type wound-induced trypsin inhibitor from Medicago sativa (Alfalfa).